Consider the following 174-residue polypeptide: Repair DNA polymerase X (174 aa).

The segment at 42–51 (REEKMLNDVD) is involved in ssDNA binding. Mg(2+) contacts are provided by Asp-49 and Asp-51. Cysteines 81 and 86 form a disulfide. Residue Asp-100 coordinates Mg(2+).

The protein belongs to the DNA polymerase type-X family. Mg(2+) serves as cofactor.

Its subcellular location is the virion. It catalyses the reaction DNA(n) + a 2'-deoxyribonucleoside 5'-triphosphate = DNA(n+1) + diphosphate. Its function is as follows. Error-prone polymerase lacking a proofreading 3'-5' exonuclease which catalyzes the gap-filling reaction during the DNA repair process. Specifically binds intermediates in the single-nucleotide base-excision repair process. Also catalyzes DNA polymerization with low nucleotide-insertion fidelity. Probably acts as a strategic DNA mutase, which gives rise to a rapid emergence of variants. Generates mismatched G-G pairs, in that case, the polymerase first binds the deoxynucleotide followed by mismatch formation. Together with the viral DNA ligase, fills the single nucleotide gaps generated by the AP endonuclease. Binds DNA with high affinity via the helix alphaE. The chain is Repair DNA polymerase X from African swine fever virus (isolate Tick/Malawi/Lil 20-1/1983) (ASFV).